The chain runs to 178 residues: Protein-export protein SecB (178 aa).

Over residues 1–13 the composition is skewed to acidic residues; sequence MADEGDVLTDLDM. Positions 1–25 are disordered; that stretch reads MADEGDVLTDLDMDPAAGGNGADNR.

Belongs to the SecB family. Homotetramer, a dimer of dimers. One homotetramer interacts with 1 SecA dimer.

It is found in the cytoplasm. Its function is as follows. One of the proteins required for the normal export of preproteins out of the cell cytoplasm. It is a molecular chaperone that binds to a subset of precursor proteins, maintaining them in a translocation-competent state. It also specifically binds to its receptor SecA. The sequence is that of Protein-export protein SecB from Erythrobacter litoralis (strain HTCC2594).